The primary structure comprises 92 residues: Small ribosomal subunit protein uS19 (92 aa).

Belongs to the universal ribosomal protein uS19 family.

In terms of biological role, protein S19 forms a complex with S13 that binds strongly to the 16S ribosomal RNA. The sequence is that of Small ribosomal subunit protein uS19 from Lactococcus lactis subsp. cremoris (strain MG1363).